We begin with the raw amino-acid sequence, 1194 residues long: Probable disease resistance protein RPP1 (1194 aa).

Residues 1–27 (MGSVMSLGCSKRKATNQDVDSESRKRR) are disordered. The TIR domain occupies 96–260 (WKHDVFPSFH…KISTDVSNML (165 aa)). Residue 105–110 (HGADVR) participates in NAD(+) binding. E171 is a catalytic residue. One can recognise an NB-ARC domain in the interval 280–535 (DMLEQLLRLD…ACLFNGESTT (256 aa)). LRR repeat units follow at residues 623-647 (LSNT…HFVR), 658-681 (QLAL…GYES), 690-713 (PEFL…TKQL), 714-737 (RNLK…STAT), 739-760 (LEEL…IEKL), 761-784 (TSLQ…ENAT), 786-807 (LREL…IGTA), 808-831 (TNLK…IGDI), 832-855 (TDLE…IGNL), 866-878 (CSKL…NINL), 879-899 (KSLD…PEIS), 900-922 (THIS…IMSW), 943-965 (FDII…VKRM), and 966-991 (SRLR…SLDY). The tract at residues 1170–1194 (RRSSSPDLSPESSRVSSYDHCLRGD) is disordered. Over residues 1171-1185 (RSSSPDLSPESSRVS) the composition is skewed to low complexity.

This sequence belongs to the disease resistance TIR-NB-LRR family.

The enzyme catalyses NAD(+) + H2O = ADP-D-ribose + nicotinamide + H(+). TIR-NB-LRR receptor-like protein that confers resistance to the pathogen Hyaloperonospora arabidopsis. Probably acts as a NAD(+) hydrolase (NADase): in response to activation, catalyzes cleavage of NAD(+) into ADP-D-ribose (ADPR) and nicotinamide; NAD(+) cleavage triggering a defense system that promotes cell death. This chain is Probable disease resistance protein RPP1, found in Arabidopsis thaliana (Mouse-ear cress).